The chain runs to 448 residues: Trigger factor (448 aa).

A PPIase FKBP-type domain is found at 173-258 (SDRVTIDFVG…LKQIEWAHMP (86 aa)).

This sequence belongs to the FKBP-type PPIase family. Tig subfamily.

The protein resides in the cytoplasm. It catalyses the reaction [protein]-peptidylproline (omega=180) = [protein]-peptidylproline (omega=0). Functionally, involved in protein export. Acts as a chaperone by maintaining the newly synthesized protein in an open conformation. Functions as a peptidyl-prolyl cis-trans isomerase. This is Trigger factor from Herminiimonas arsenicoxydans.